The following is a 467-amino-acid chain: Putative serine/threonine-protein kinase R400 (467 aa).

The 369-residue stretch at 99–467 folds into the Protein kinase domain; it reads GVKLIYIKSG…STGQKPTKKV (369 aa). ATP contacts are provided by residues 105–113 and lysine 129; that span reads IKSGTTGHT. The Proton acceptor role is filled by aspartate 272. The tract at residues 443 to 467 is disordered; it reads LFQQGNGSKQPVPKKSTGQKPTKKV. The segment covering 458-467 has biased composition (polar residues); the sequence is STGQKPTKKV.

The protein belongs to the protein kinase superfamily. Ser/Thr protein kinase family.

The protein localises to the virion. It carries out the reaction L-seryl-[protein] + ATP = O-phospho-L-seryl-[protein] + ADP + H(+). The enzyme catalyses L-threonyl-[protein] + ATP = O-phospho-L-threonyl-[protein] + ADP + H(+). This Acanthamoeba polyphaga mimivirus (APMV) protein is Putative serine/threonine-protein kinase R400.